We begin with the raw amino-acid sequence, 380 residues long: 3-dehydroquinate synthase (380 aa).

Residues 100-104 (GAASD), 124-125 (TT), K137, and K146 each bind NAD(+). The Zn(2+) site is built by E179, H251, and H267. Residues 320–343 (YMQRDKKNMQSNDTDSDKDSREMP) form a disordered region.

It belongs to the sugar phosphate cyclases superfamily. Dehydroquinate synthase family. It depends on NAD(+) as a cofactor. Co(2+) serves as cofactor. Requires Zn(2+) as cofactor.

The protein resides in the cytoplasm. The enzyme catalyses 7-phospho-2-dehydro-3-deoxy-D-arabino-heptonate = 3-dehydroquinate + phosphate. It functions in the pathway metabolic intermediate biosynthesis; chorismate biosynthesis; chorismate from D-erythrose 4-phosphate and phosphoenolpyruvate: step 2/7. Catalyzes the conversion of 3-deoxy-D-arabino-heptulosonate 7-phosphate (DAHP) to dehydroquinate (DHQ). In Tropheryma whipplei (strain Twist) (Whipple's bacillus), this protein is 3-dehydroquinate synthase.